Consider the following 810-residue polypeptide: Plasminogen (810 aa).

The signal sequence occupies residues 1–19; that stretch reads MQRKELVLLFLLFLQPGHG. The PAN domain maps to 20-98; sequence IPLDDYVTTQ…RDVILFEKKM (79 aa). 24 disulfides stabilise this stretch: cysteine 49/cysteine 73, cysteine 53/cysteine 61, cysteine 103/cysteine 181, cysteine 124/cysteine 164, cysteine 152/cysteine 176, cysteine 185/cysteine 262, cysteine 188/cysteine 316, cysteine 206/cysteine 245, cysteine 234/cysteine 257, cysteine 275/cysteine 352, cysteine 296/cysteine 335, cysteine 324/cysteine 347, cysteine 379/cysteine 456, cysteine 400/cysteine 439, cysteine 428/cysteine 451, cysteine 482/cysteine 561, cysteine 503/cysteine 544, cysteine 532/cysteine 556, cysteine 569/cysteine 685, cysteine 579/cysteine 586, cysteine 607/cysteine 623, cysteine 699/cysteine 766, cysteine 729/cysteine 745, and cysteine 756/cysteine 784. Kringle domains lie at 103-181, 185-262, 275-352, 379-456, and 482-561; these read CKVG…IIQC, CMHC…IPRC, CLMG…IPDC, CYQG…LKKC, and CIID…IPHC. A glycan (N-linked (GlcNAc...) asparagine) is linked at asparagine 339. Residues 398–418 are disordered; that stretch reads KKCQPWTSMRPHRHSKTPENY. Positions 582–808 constitute a Peptidase S1 domain; the sequence is RVGGCVAHPH…YVSWLQDVMR (227 aa). Position 598 is a phosphoserine (serine 598). Active-site charge relay system residues include histidine 622 and aspartate 665. Serine 760 acts as the Charge relay system in catalysis.

The protein belongs to the peptidase S1 family. Plasminogen subfamily. As to quaternary structure, interacts with CSPG4 and AMOT. Interacts (via the Kringle domains) with HRG; the interaction tethers PLG to the cell surface and enhances its activation. Interacts (via Kringle 4 domain) with ADA; the interaction stimulates PLG activation when in complex with DPP4. Angiostatin: Interacts with ATP5F1A; the interaction inhibits most of the angiogenic effects of angiostatin. In the presence of the inhibitor, the activation involves only cleavage after Arg-582, yielding two chains held together by two disulfide bonds. In the absence of the inhibitor, the activation involves additionally the removal of the activation peptide.

It localises to the secreted. It catalyses the reaction Preferential cleavage: Lys-|-Xaa &gt; Arg-|-Xaa, higher selectivity than trypsin. Converts fibrin into soluble products.. Its activity is regulated as follows. Converted into plasmin by plasminogen activators, both plasminogen and its activator being bound to fibrin. Cannot be activated with streptokinase. In terms of biological role, plasmin dissolves the fibrin of blood clots and acts as a proteolytic factor in a variety of other processes including embryonic development, tissue remodeling, tumor invasion, and inflammation. In ovulation, weakens the walls of the Graafian follicle. It activates the urokinase-type plasminogen activator, collagenases and several complement zymogens, such as C1, C4 and C5. Cleavage of fibronectin and laminin leads to cell detachment and apoptosis. Also cleaves fibrin, thrombospondin and von Willebrand factor. Its role in tissue remodeling and tumor invasion may be modulated by CSPG4. Binds to cells. The sequence is that of Plasminogen (PLG) from Erinaceus europaeus (Western European hedgehog).